Reading from the N-terminus, the 151-residue chain is Phosphoribosyl-AMP cyclohydrolase (151 aa).

A compositionally biased stretch (polar residues) spans 1–13 (MMTLTFASPPQNK). The segment at 1-20 (MMTLTFASPPQNKSDLETGP) is disordered. D93 provides a ligand contact to Mg(2+). A Zn(2+)-binding site is contributed by C94. Mg(2+)-binding residues include D95 and D97. Zn(2+) is bound by residues C112 and C119.

It belongs to the PRA-CH family. Homodimer. It depends on Mg(2+) as a cofactor. Zn(2+) is required as a cofactor.

It localises to the cytoplasm. The enzyme catalyses 1-(5-phospho-beta-D-ribosyl)-5'-AMP + H2O = 1-(5-phospho-beta-D-ribosyl)-5-[(5-phospho-beta-D-ribosylamino)methylideneamino]imidazole-4-carboxamide. It participates in amino-acid biosynthesis; L-histidine biosynthesis; L-histidine from 5-phospho-alpha-D-ribose 1-diphosphate: step 3/9. Catalyzes the hydrolysis of the adenine ring of phosphoribosyl-AMP. This chain is Phosphoribosyl-AMP cyclohydrolase, found in Sinorhizobium medicae (strain WSM419) (Ensifer medicae).